The sequence spans 57 residues: Small ribosomal subunit protein bS21 (57 aa).

The disordered stretch occupies residues 35–57; sequence REFYEKPSVRRKKKSEAARKRKY. Over residues 43–57 the composition is skewed to basic residues; it reads VRRKKKSEAARKRKY.

This sequence belongs to the bacterial ribosomal protein bS21 family.

The sequence is that of Small ribosomal subunit protein bS21 from Bacillus licheniformis (strain ATCC 14580 / DSM 13 / JCM 2505 / CCUG 7422 / NBRC 12200 / NCIMB 9375 / NCTC 10341 / NRRL NRS-1264 / Gibson 46).